A 172-amino-acid polypeptide reads, in one-letter code: Large ribosomal subunit protein uL10 (172 aa).

Belongs to the universal ribosomal protein uL10 family. As to quaternary structure, part of the ribosomal stalk of the 50S ribosomal subunit. The N-terminus interacts with L11 and the large rRNA to form the base of the stalk. The C-terminus forms an elongated spine to which L12 dimers bind in a sequential fashion forming a multimeric L10(L12)X complex.

In terms of biological role, forms part of the ribosomal stalk, playing a central role in the interaction of the ribosome with GTP-bound translation factors. The chain is Large ribosomal subunit protein uL10 from Rhizobium meliloti (strain 1021) (Ensifer meliloti).